Consider the following 347-residue polypeptide: Protein RecA (347 aa).

68-75 is an ATP binding site; that stretch reads GPESSGKT.

It belongs to the RecA family.

Its subcellular location is the cytoplasm. Its function is as follows. Can catalyze the hydrolysis of ATP in the presence of single-stranded DNA, the ATP-dependent uptake of single-stranded DNA by duplex DNA, and the ATP-dependent hybridization of homologous single-stranded DNAs. It interacts with LexA causing its activation and leading to its autocatalytic cleavage. The protein is Protein RecA of Nocardia farcinica (strain IFM 10152).